A 1066-amino-acid chain; its full sequence is Phosphatidylinositol 4-kinase PIK1 (1066 aa).

Residues 1–133 (MHKASSSKKS…GFQVARRVLN (133 aa)) form the PIK helical domain. 2 positions are modified to phosphoserine: S10 and S236. Disordered regions lie at residues 218–240 (KKTSRSKRVSSNRSSTPTSPIDL), 303–411 (DGKN…KKAN), and 564–624 (NENR…LGDM). The segment covering 342–356 (NNEDETGGETEEDAD) has biased composition (acidic residues). Polar residues-rich tracts occupy residues 374–411 (QPRTSSASSASLEGTPKLNRTNSQPLSRQAFKNSKKAN) and 570–597 (STLTSNNTRSSVYDSNSFNNGASRNEGL). A Phosphoserine modification is found at S384. T394 is subject to Phosphothreonine. Phosphoserine is present on residues S396 and S592. Over residues 598–609 (SSTSRSDSASTA) the composition is skewed to low complexity. Positions 770–1049 (ATKKERIRKT…FLIGKSLGSI (280 aa)) constitute a PI3K/PI4K catalytic domain. A G-loop region spans residues 776-782 (IRKTSEY). A catalytic loop region spans residues 915 to 923 (QVKDRHNGN). The interval 934-958 (HIDFGFMLSNSPGSVGFEAAPFKLT) is activation loop.

It belongs to the PI3/PI4-kinase family. Type III PI4K subfamily. As to quaternary structure, interacts with FRQ1.

It localises to the nucleus. It is found in the golgi apparatus. Its subcellular location is the trans-Golgi network. It catalyses the reaction a 1,2-diacyl-sn-glycero-3-phospho-(1D-myo-inositol) + ATP = a 1,2-diacyl-sn-glycero-3-phospho-(1D-myo-inositol 4-phosphate) + ADP + H(+). Its function is as follows. Acts on phosphatidylinositol (PI) in the first committed step in the production of the second messenger inositol 1,4,5,-trisphosphate. PIK1 is part of a nuclear phosphoinositide cycle and could control cytokinesis through the actin cytoskeleton. Involved in the response to mating pheromone. This chain is Phosphatidylinositol 4-kinase PIK1, found in Saccharomyces cerevisiae (strain ATCC 204508 / S288c) (Baker's yeast).